Consider the following 164-residue polypeptide: MPLLDSFKVDHTKMPAPAVRLAKVMKTPKGDDISVFDLRFCIPNKDIMSEKGTHTLEHLFAGFMRDHLNSNSVEIIDISPMGCRTGFYMSLIGTPDEKSVAKAWEEAMKDVLSVSDQSKIPELNIYQCGTCAMHSLDEAKQIAQKVLNLGISIMNNKELKLENA.

The Fe cation site is built by His-54, His-58, and Cys-128.

The protein belongs to the LuxS family. As to quaternary structure, homodimer. It depends on Fe cation as a cofactor.

It carries out the reaction S-(5-deoxy-D-ribos-5-yl)-L-homocysteine = (S)-4,5-dihydroxypentane-2,3-dione + L-homocysteine. In terms of biological role, involved in the synthesis of autoinducer 2 (AI-2) which is secreted by bacteria and is used to communicate both the cell density and the metabolic potential of the environment. The regulation of gene expression in response to changes in cell density is called quorum sensing. Catalyzes the transformation of S-ribosylhomocysteine (RHC) to homocysteine (HC) and 4,5-dihydroxy-2,3-pentadione (DPD). This Campylobacter jejuni subsp. jejuni serotype O:6 (strain 81116 / NCTC 11828) protein is S-ribosylhomocysteine lyase.